Here is a 419-residue protein sequence, read N- to C-terminus: Aminoacyltransferase FemB (419 aa).

It belongs to the FemABX family. Homodimer. Interacts with FemA.

The protein localises to the cytoplasm. It carries out the reaction MurNAc-L-Ala-D-isoglutaminyl-L-Lys-(N(6)-tri-Gly)-D-Ala-D-Ala-diphospho-di-trans,octa-cis-undecaprenyl-GlcNAc + 2 glycyl-tRNA(Gly) = MurNAc-L-Ala-D-isoglutaminyl-L-Lys-(N(6)-penta-Gly)-D-Ala-D-Ala-diphospho-di-trans,octa-cis-undecaprenyl-GlcNAc + 2 tRNA(Gly) + 2 H(+). Functionally, catalyzes the formation of the pentaglycine interpeptide bridge, which is characteristic of the S.aureus peptidoglycan. Adds glycines 4 and 5 of the pentaglycine bridge, using glycyl-tRNA(Gly) as donor. Involved in resistance to methicillin. This Staphylococcus aureus (strain MW2) protein is Aminoacyltransferase FemB (femB).